Reading from the N-terminus, the 452-residue chain is tRNA-2-methylthio-N(6)-dimethylallyladenosine synthase (452 aa).

The MTTase N-terminal domain maps to 5 to 121 (RRYHITTFGC…LADLLAQVEA (117 aa)). Positions 14, 50, 84, 156, 160, and 163 each coordinate [4Fe-4S] cluster. Positions 142-379 (RDSTITAWVN…NHLVAQMAAD (238 aa)) constitute a Radical SAM core domain. A TRAM domain is found at 382–446 (QRYLGRTEEV…AFSLTGQILS (65 aa)).

This sequence belongs to the methylthiotransferase family. MiaB subfamily. As to quaternary structure, monomer. [4Fe-4S] cluster serves as cofactor.

Its subcellular location is the cytoplasm. It catalyses the reaction N(6)-dimethylallyladenosine(37) in tRNA + (sulfur carrier)-SH + AH2 + 2 S-adenosyl-L-methionine = 2-methylsulfanyl-N(6)-dimethylallyladenosine(37) in tRNA + (sulfur carrier)-H + 5'-deoxyadenosine + L-methionine + A + S-adenosyl-L-homocysteine + 2 H(+). Its function is as follows. Catalyzes the methylthiolation of N6-(dimethylallyl)adenosine (i(6)A), leading to the formation of 2-methylthio-N6-(dimethylallyl)adenosine (ms(2)i(6)A) at position 37 in tRNAs that read codons beginning with uridine. This chain is tRNA-2-methylthio-N(6)-dimethylallyladenosine synthase, found in Synechococcus elongatus (strain ATCC 33912 / PCC 7942 / FACHB-805) (Anacystis nidulans R2).